The primary structure comprises 568 residues: Urease subunit alpha (568 aa).

Positions 130–568 (GGIDSHIHFI…LPMAQRYFLF (439 aa)) constitute a Urease domain. Ni(2+)-binding residues include H135, H137, and K218. K218 is modified (N6-carboxylysine). Residue H220 coordinates substrate. Ni(2+) contacts are provided by H247 and H273. Residue H321 is the Proton donor of the active site. D361 provides a ligand contact to Ni(2+).

Belongs to the metallo-dependent hydrolases superfamily. Urease alpha subunit family. As to quaternary structure, heterotrimer of UreA (gamma), UreB (beta) and UreC (alpha) subunits. Three heterotrimers associate to form the active enzyme. Ni cation is required as a cofactor. In terms of processing, carboxylation allows a single lysine to coordinate two nickel ions.

Its subcellular location is the cytoplasm. It carries out the reaction urea + 2 H2O + H(+) = hydrogencarbonate + 2 NH4(+). The protein operates within nitrogen metabolism; urea degradation; CO(2) and NH(3) from urea (urease route): step 1/1. This Nitrosospira multiformis (strain ATCC 25196 / NCIMB 11849 / C 71) protein is Urease subunit alpha.